Consider the following 372-residue polypeptide: Cytochrome b (372 aa).

The next 4 helical transmembrane spans lie at 25 to 45 (FGSM…FLAV), 69 to 90 (WMMQ…YIHM), 105 to 125 (WLSG…GYVL), and 170 to 190 (FFAL…LHIM). The heme b site is built by His75 and His89. The heme b site is built by His174 and His188. Residue His193 coordinates a ubiquinone. The next 4 membrane-spanning stretches (helical) occupy residues 218-238 (YKDL…ISFL), 280-300 (LGGA…PFTH), 312-332 (FMQL…WTAT), and 339-358 (YTTI…MSNL).

The protein belongs to the cytochrome b family. The cytochrome bc1 complex contains 3 respiratory subunits (MT-CYB, CYC1 and UQCRFS1), 2 core proteins (UQCRC1 and UQCRC2) and probably 6 low-molecular weight proteins. Heme b serves as cofactor.

The protein localises to the mitochondrion inner membrane. Functionally, component of the ubiquinol-cytochrome c reductase complex (complex III or cytochrome b-c1 complex) that is part of the mitochondrial respiratory chain. The b-c1 complex mediates electron transfer from ubiquinol to cytochrome c. Contributes to the generation of a proton gradient across the mitochondrial membrane that is then used for ATP synthesis. The polypeptide is Cytochrome b (MT-CYB) (Sanzinia madagascariensis (Madagascar tree boa)).